A 243-amino-acid chain; its full sequence is DNA repair protein RecO (243 aa).

Belongs to the RecO family.

In terms of biological role, involved in DNA repair and RecF pathway recombination. The sequence is that of DNA repair protein RecO from Hyphomonas neptunium (strain ATCC 15444).